Here is a 115-residue protein sequence, read N- to C-terminus: Large ribosomal subunit protein bL20 (115 aa).

It belongs to the bacterial ribosomal protein bL20 family.

Its function is as follows. Binds directly to 23S ribosomal RNA and is necessary for the in vitro assembly process of the 50S ribosomal subunit. It is not involved in the protein synthesizing functions of that subunit. This Prochlorococcus marinus (strain MIT 9313) protein is Large ribosomal subunit protein bL20.